The sequence spans 883 residues: Serine/threonine-protein phosphatase BSL1 homolog (883 aa).

Kelch repeat units follow at residues 64–113, 221–271, 273–323, and 341–387; these read ASSG…AVGT, MLLL…VFVG, RLHV…DHDA, and QIYI…NRNH. Disordered stretches follow at residues 381 to 402, 430 to 466, and 499 to 525; these read ENQNRNHNFNSDSPTTNNSTDK, SHASSEDSLSEGIGSESPLSETSPMPEDLDDGGSLEP, and NESRRMHPSSNDQSYPAKKALNRQRSP. Positions 385–399 are enriched in polar residues; it reads RNHNFNSDSPTTNNS. Mn(2+) is bound by residues Asp-586, His-588, Asp-620, and Asn-652. His-653 functions as the Proton donor in the catalytic mechanism. Mn(2+)-binding residues include His-705 and His-784. Positions 861-883 are disordered; that stretch reads QRPPTPTRGRPQSASDRNSLAYI. Over residues 872–883 the composition is skewed to polar residues; the sequence is QSASDRNSLAYI.

Belongs to the PPP phosphatase family. BSU subfamily. In terms of assembly, interacts with the phosphorylated form of BSK3. Requires Mn(2+) as cofactor.

The protein localises to the nucleus. It catalyses the reaction O-phospho-L-seryl-[protein] + H2O = L-seryl-[protein] + phosphate. The enzyme catalyses O-phospho-L-threonyl-[protein] + H2O = L-threonyl-[protein] + phosphate. The protein is Serine/threonine-protein phosphatase BSL1 homolog (BSL1) of Oryza sativa subsp. japonica (Rice).